A 901-amino-acid chain; its full sequence is Protein translocase subunit SecA (901 aa).

ATP is bound by residues Q87, G105–T109, and D512. Positions H859–Q901 are disordered. Residues C885, C887, C896, and H897 each contribute to the Zn(2+) site. Basic residues predominate over residues K891–Q901.

Belongs to the SecA family. In terms of assembly, monomer and homodimer. Part of the essential Sec protein translocation apparatus which comprises SecA, SecYEG and auxiliary proteins SecDF-YajC and YidC. The cofactor is Zn(2+).

The protein resides in the cell inner membrane. It is found in the cytoplasm. It carries out the reaction ATP + H2O + cellular proteinSide 1 = ADP + phosphate + cellular proteinSide 2.. Functionally, part of the Sec protein translocase complex. Interacts with the SecYEG preprotein conducting channel. Has a central role in coupling the hydrolysis of ATP to the transfer of proteins into and across the cell membrane, serving both as a receptor for the preprotein-SecB complex and as an ATP-driven molecular motor driving the stepwise translocation of polypeptide chains across the membrane. In Escherichia coli O157:H7, this protein is Protein translocase subunit SecA.